We begin with the raw amino-acid sequence, 347 residues long: Very-long-chain 3-oxoacyl-CoA reductase (347 aa).

The chain crosses the membrane as a helical span at residues L20–L40. Residues V66, D120, N147, Y223, K227, V256, and S258 each contribute to the NADP(+) site. Catalysis depends on Y223, which acts as the Proton donor. K227 acts as the Lowers pKa of active site Tyr in catalysis.

The protein belongs to the short-chain dehydrogenases/reductases (SDR) family. Interacts with the fatty acid elongation system components ELO3 and TSC13.

The protein localises to the endoplasmic reticulum membrane. The enzyme catalyses a very-long-chain (3R)-3-hydroxyacyl-CoA + NADP(+) = a very-long-chain 3-oxoacyl-CoA + NADPH + H(+). It functions in the pathway lipid metabolism; fatty acid biosynthesis. Its function is as follows. Component of the microsomal membrane bound fatty acid elongation system, which produces the 26-carbon very long-chain fatty acids (VLCFA) from palmitate. Catalyzes the reduction of the 3-ketoacyl-CoA intermediate that is formed in each cycle of fatty acid elongation. VLCFAs serve as precursors for ceramide and sphingolipids. This chain is Very-long-chain 3-oxoacyl-CoA reductase, found in Saccharomyces cerevisiae (strain RM11-1a) (Baker's yeast).